The chain runs to 129 residues: Sulfurtransferase TusD (129 aa).

Residue cysteine 79 is the Cysteine persulfide intermediate of the active site.

The protein belongs to the DsrE/TusD family. In terms of assembly, heterohexamer, formed by a dimer of trimers. The hexameric TusBCD complex contains 2 copies each of TusB, TusC and TusD. The TusBCD complex interacts with TusE.

Its subcellular location is the cytoplasm. Functionally, part of a sulfur-relay system required for 2-thiolation of 5-methylaminomethyl-2-thiouridine (mnm(5)s(2)U) at tRNA wobble positions. Accepts sulfur from TusA and transfers it in turn to TusE. This is Sulfurtransferase TusD from Serratia proteamaculans (strain 568).